The sequence spans 312 residues: Holliday junction branch migration complex subunit RuvB (312 aa).

The tract at residues 1-168 is large ATPase domain (RuvB-L); sequence MKTNYEFRPQ…FGHIFHLNEY (168 aa). ATP contacts are provided by residues arginine 8, glycine 49, lysine 52, threonine 53, threonine 54, 115 to 117, arginine 158, tyrosine 168, and arginine 206; that span reads EDF. A Mg(2+)-binding site is contributed by threonine 53. Residues 169–234 form a small ATPAse domain (RuvB-S) region; it reads EPSEISAIIL…DIKNIFKKIQ (66 aa). The interval 237–312 is head domain (RuvB-H); sequence EFGLDEQDIN…DFLKNNQLIK (76 aa). Lysine 290 and arginine 295 together coordinate DNA.

The protein belongs to the RuvB family. As to quaternary structure, homohexamer. Forms an RuvA(8)-RuvB(12)-Holliday junction (HJ) complex. HJ DNA is sandwiched between 2 RuvA tetramers; dsDNA enters through RuvA and exits via RuvB. An RuvB hexamer assembles on each DNA strand where it exits the tetramer. Each RuvB hexamer is contacted by two RuvA subunits (via domain III) on 2 adjacent RuvB subunits; this complex drives branch migration. In the full resolvosome a probable DNA-RuvA(4)-RuvB(12)-RuvC(2) complex forms which resolves the HJ.

It is found in the cytoplasm. It catalyses the reaction ATP + H2O = ADP + phosphate + H(+). Functionally, the RuvA-RuvB-RuvC complex processes Holliday junction (HJ) DNA during genetic recombination and DNA repair, while the RuvA-RuvB complex plays an important role in the rescue of blocked DNA replication forks via replication fork reversal (RFR). RuvA specifically binds to HJ cruciform DNA, conferring on it an open structure. The RuvB hexamer acts as an ATP-dependent pump, pulling dsDNA into and through the RuvAB complex. RuvB forms 2 homohexamers on either side of HJ DNA bound by 1 or 2 RuvA tetramers; 4 subunits per hexamer contact DNA at a time. Coordinated motions by a converter formed by DNA-disengaged RuvB subunits stimulates ATP hydrolysis and nucleotide exchange. Immobilization of the converter enables RuvB to convert the ATP-contained energy into a lever motion, pulling 2 nucleotides of DNA out of the RuvA tetramer per ATP hydrolyzed, thus driving DNA branch migration. The RuvB motors rotate together with the DNA substrate, which together with the progressing nucleotide cycle form the mechanistic basis for DNA recombination by continuous HJ branch migration. Branch migration allows RuvC to scan DNA until it finds its consensus sequence, where it cleaves and resolves cruciform DNA. This Ureaplasma parvum serovar 3 (strain ATCC 27815 / 27 / NCTC 11736) protein is Holliday junction branch migration complex subunit RuvB.